The chain runs to 709 residues: Homeobox-leucine zipper protein HDG4 (709 aa).

Residues 61–92 (ESGSGKSTGSGHDPVENTAIEQEPPAAKKKRY) are disordered. The homeobox DNA-binding region spans 88-147 (KKKRYHRHTASQIQQMEALFKENAHPDTKTRLRLSKKLGLSPIQVKFWFQNKRTQIKAQQ). Residues 137-205 (QNKRTQIKAQ…LDRLRSIVSM (69 aa)) are a coiled coil. Positions 229 to 466 (AEEEKAIDME…LKRQCERMAS (238 aa)) constitute an START domain.

Belongs to the HD-ZIP homeobox family. Class IV subfamily. In terms of tissue distribution, expressed in flowers.

The protein localises to the nucleus. In terms of biological role, probable transcription factor. The chain is Homeobox-leucine zipper protein HDG4 from Arabidopsis thaliana (Mouse-ear cress).